The following is a 258-amino-acid chain: Global transcriptional regulator CodY (258 aa).

The tract at residues 1–156 (MSTLLSKTRR…SATIVGMELL (156 aa)) is GAF domain. The H-T-H motif DNA-binding region spans 204–223 (ASKIADKVGITRSVIVNALR).

Belongs to the CodY family.

Its subcellular location is the cytoplasm. Its function is as follows. DNA-binding global transcriptional regulator which is involved in the adaptive response to starvation and acts by directly or indirectly controlling the expression of numerous genes in response to nutrient availability. During rapid exponential growth, CodY is highly active and represses genes whose products allow adaptation to nutrient depletion. This chain is Global transcriptional regulator CodY, found in Clostridium perfringens (strain SM101 / Type A).